The following is a 251-amino-acid chain: Ubiquinone/menaquinone biosynthesis C-methyltransferase UbiE (251 aa).

Residues threonine 74, aspartate 95, 123–124 (NA), and serine 140 contribute to the S-adenosyl-L-methionine site.

It belongs to the class I-like SAM-binding methyltransferase superfamily. MenG/UbiE family.

It carries out the reaction a 2-demethylmenaquinol + S-adenosyl-L-methionine = a menaquinol + S-adenosyl-L-homocysteine + H(+). The catalysed reaction is a 2-methoxy-6-(all-trans-polyprenyl)benzene-1,4-diol + S-adenosyl-L-methionine = a 5-methoxy-2-methyl-3-(all-trans-polyprenyl)benzene-1,4-diol + S-adenosyl-L-homocysteine + H(+). The protein operates within quinol/quinone metabolism; menaquinone biosynthesis; menaquinol from 1,4-dihydroxy-2-naphthoate: step 2/2. It functions in the pathway cofactor biosynthesis; ubiquinone biosynthesis. Functionally, methyltransferase required for the conversion of demethylmenaquinol (DMKH2) to menaquinol (MKH2) and the conversion of 2-polyprenyl-6-methoxy-1,4-benzoquinol (DDMQH2) to 2-polyprenyl-3-methyl-6-methoxy-1,4-benzoquinol (DMQH2). This Salmonella paratyphi A (strain AKU_12601) protein is Ubiquinone/menaquinone biosynthesis C-methyltransferase UbiE.